A 468-amino-acid polypeptide reads, in one-letter code: uncharacterized protein (468 aa).

Helical transmembrane passes span 59 to 79 (IPIVIIAVIYSSFIFFFALFI), 135 to 155 (TWINSILEILALIYSFLLLLV), 215 to 235 (VFPFTPCPLPLLLFPIFLSIL), 297 to 317 (THCCLNVFASSAFFVLLMVLV), 348 to 368 (HFIPLILTVVIELVITGLVSY), and 385 to 405 (VFTVMFTIIAVFRFVFIIILF).

It is found in the membrane. This is an uncharacterized protein from Caenorhabditis elegans.